Reading from the N-terminus, the 288-residue chain is uncharacterized protein (288 aa).

Residues 92–112 form a helical membrane-spanning segment; sequence LPTILVILGVIVVIAIVYAII. Residues 121–183 are disordered; it reads DDHNAASEKA…NDSEKLEIKA (63 aa). 2 stretches are compositionally biased toward basic and acidic residues: residues 136-146 and 154-181; these read SKYEIPKDSTL and SEKE…KLEI. The stretch at 147-185 forms a coiled coil; that stretch reads KENQNNSSEKETDTKKETKENEDKKKENDSEKLEIKAAG.

Its subcellular location is the cell membrane. This is an uncharacterized protein from Bacillus subtilis (strain 168).